Here is a 138-residue protein sequence, read N- to C-terminus: Large ribosomal subunit protein uL16 (138 aa).

Positions 1–13 (MLQPSRRKFRKEQ) are enriched in basic residues. The segment at 1-20 (MLQPSRRKFRKEQKGRNTGV) is disordered.

Belongs to the universal ribosomal protein uL16 family. Part of the 50S ribosomal subunit.

Its function is as follows. Binds 23S rRNA and is also seen to make contacts with the A and possibly P site tRNAs. This is Large ribosomal subunit protein uL16 from Leptothrix cholodnii (strain ATCC 51168 / LMG 8142 / SP-6) (Leptothrix discophora (strain SP-6)).